A 412-amino-acid polypeptide reads, in one-letter code: Short-chain specific acyl-CoA dehydrogenase, mitochondrial (412 aa).

Residues 1-24 (MAATLLARACGLVRGAPWPWGWRR) constitute a mitochondrion transit peptide. Thr-27 is modified (phosphothreonine). Lys-51 carries the post-translational modification N6-acetyllysine; alternate. The residue at position 51 (Lys-51) is an N6-succinyllysine; alternate. Lys-72 bears the N6-acetyllysine mark. At Lys-129 the chain carries N6-acetyllysine; alternate. The residue at position 129 (Lys-129) is an N6-succinyllysine; alternate. FAD-binding positions include 152-161 (FALSEPGNGS) and 185-187 (WIT). Ser-161 provides a ligand contact to substrate. The residue at position 208 (Lys-208) is an N6-acetyllysine. Lys-262 carries the N6-acetyllysine; alternate modification. Lys-262 is subject to N6-succinyllysine; alternate. 269-272 (DTGR) contributes to the substrate binding site. Arg-297 contacts FAD. Residue Lys-306 is modified to N6-acetyllysine; alternate. Position 306 is an N6-succinyllysine; alternate (Lys-306). FAD contacts are provided by residues Gln-308 and 365 to 369 (QILGG). Catalysis depends on Glu-392, which acts as the Proton acceptor. Gly-393 contributes to the substrate binding site. 394 to 396 (TSE) contacts FAD.

This sequence belongs to the acyl-CoA dehydrogenase family. As to quaternary structure, homotetramer. Requires FAD as cofactor.

The protein localises to the mitochondrion matrix. The enzyme catalyses a short-chain 2,3-saturated fatty acyl-CoA + oxidized [electron-transfer flavoprotein] + H(+) = a short-chain (2E)-enoyl-CoA + reduced [electron-transfer flavoprotein]. It carries out the reaction butanoyl-CoA + oxidized [electron-transfer flavoprotein] + H(+) = (2E)-butenoyl-CoA + reduced [electron-transfer flavoprotein]. It catalyses the reaction pentanoyl-CoA + oxidized [electron-transfer flavoprotein] + H(+) = (2E)-pentenoyl-CoA + reduced [electron-transfer flavoprotein]. The catalysed reaction is hexanoyl-CoA + oxidized [electron-transfer flavoprotein] + H(+) = (2E)-hexenoyl-CoA + reduced [electron-transfer flavoprotein]. Its pathway is lipid metabolism; mitochondrial fatty acid beta-oxidation. In terms of biological role, short-chain specific acyl-CoA dehydrogenase is one of the acyl-CoA dehydrogenases that catalyze the first step of mitochondrial fatty acid beta-oxidation, an aerobic process breaking down fatty acids into acetyl-CoA and allowing the production of energy from fats. The first step of fatty acid beta-oxidation consists in the removal of one hydrogen from C-2 and C-3 of the straight-chain fatty acyl-CoA thioester, resulting in the formation of trans-2-enoyl-CoA. Among the different mitochondrial acyl-CoA dehydrogenases, short-chain specific acyl-CoA dehydrogenase acts specifically on acyl-CoAs with saturated 4 to 6 carbons long primary chains. The chain is Short-chain specific acyl-CoA dehydrogenase, mitochondrial (ACADS) from Bos taurus (Bovine).